A 194-amino-acid polypeptide reads, in one-letter code: Holliday junction branch migration complex subunit RuvA (194 aa).

A domain I region spans residues 1–64 (MIGRLRGVLT…DDSAALYGFL (64 aa)). Positions 65–140 (SESERRLFRH…RAADFNNGIS (76 aa)) are domain II. Residues 140-144 (STSGK) form a flexible linker region. Residues 145 to 194 (LNLDTVSEAALALQQLGYKPAEAARMARDAGTESDDVAIVIKKALQTVLR) form a domain III region.

This sequence belongs to the RuvA family. In terms of assembly, homotetramer. Forms an RuvA(8)-RuvB(12)-Holliday junction (HJ) complex. HJ DNA is sandwiched between 2 RuvA tetramers; dsDNA enters through RuvA and exits via RuvB. An RuvB hexamer assembles on each DNA strand where it exits the tetramer. Each RuvB hexamer is contacted by two RuvA subunits (via domain III) on 2 adjacent RuvB subunits; this complex drives branch migration. In the full resolvosome a probable DNA-RuvA(4)-RuvB(12)-RuvC(2) complex forms which resolves the HJ.

It localises to the cytoplasm. Its function is as follows. The RuvA-RuvB-RuvC complex processes Holliday junction (HJ) DNA during genetic recombination and DNA repair, while the RuvA-RuvB complex plays an important role in the rescue of blocked DNA replication forks via replication fork reversal (RFR). RuvA specifically binds to HJ cruciform DNA, conferring on it an open structure. The RuvB hexamer acts as an ATP-dependent pump, pulling dsDNA into and through the RuvAB complex. HJ branch migration allows RuvC to scan DNA until it finds its consensus sequence, where it cleaves and resolves the cruciform DNA. This is Holliday junction branch migration complex subunit RuvA from Xylella fastidiosa (strain M23).